The sequence spans 145 residues: RNA polymerase-binding transcription factor DksA (145 aa).

Positions 108, 111, 129, and 132 each coordinate Zn(2+). The dksA C4-type zinc-finger motif lies at 108 to 132; the sequence is CDCCGEEIGIRRLEARPTADLCIDC.

It belongs to the DksA family. In terms of assembly, interacts directly with the RNA polymerase.

It localises to the cytoplasm. Functionally, transcription factor that acts by binding directly to the RNA polymerase (RNAP). Required for negative regulation of rRNA expression and positive regulation of several amino acid biosynthesis promoters. Also required for regulation of fis expression. This is RNA polymerase-binding transcription factor DksA from Haemophilus influenzae (strain ATCC 51907 / DSM 11121 / KW20 / Rd).